Here is a 687-residue protein sequence, read N- to C-terminus: Acetyl-coenzyme A synthetase 2 (687 aa).

CoA-binding positions include 206 to 209 and T325; that span reads RGGK. Residues 401–403, 425–430, D516, and R531 each bind ATP; these read GEP and DTMWQT. A CoA-binding site is contributed by S539. R542 contacts ATP. R617 is a binding site for CoA.

Belongs to the ATP-dependent AMP-binding enzyme family.

The enzyme catalyses acetate + ATP + CoA = acetyl-CoA + AMP + diphosphate. The polypeptide is Acetyl-coenzyme A synthetase 2 (ACS2) (Eremothecium gossypii (strain ATCC 10895 / CBS 109.51 / FGSC 9923 / NRRL Y-1056) (Yeast)).